Here is a 310-residue protein sequence, read N- to C-terminus: Ribosomal RNA small subunit methyltransferase H (310 aa).

S-adenosyl-L-methionine-binding positions include 33–35, Asp52, Phe79, Asp98, and Gln105; that span reads GGH.

The protein belongs to the methyltransferase superfamily. RsmH family.

The protein resides in the cytoplasm. The enzyme catalyses cytidine(1402) in 16S rRNA + S-adenosyl-L-methionine = N(4)-methylcytidine(1402) in 16S rRNA + S-adenosyl-L-homocysteine + H(+). Its function is as follows. Specifically methylates the N4 position of cytidine in position 1402 (C1402) of 16S rRNA. The chain is Ribosomal RNA small subunit methyltransferase H from Campylobacter jejuni subsp. doylei (strain ATCC BAA-1458 / RM4099 / 269.97).